The chain runs to 196 residues: Cysteine/O-acetylserine efflux protein (196 aa).

A helical transmembrane segment spans residues 1-21 (MTPTLISAFLTYTLITALTPG). Topologically, residues 22–41 (PNNILALSSVTSHGLRRSLR) are cytoplasmic. The chain crosses the membrane as a helical span at residues 42-62 (VLAGMSVGFIITMLICAALTF). The Periplasmic segment spans residues 63–70 (SLVELDSR). The helical transmembrane segment at 71–91 (FTLVLGWIGAAYILWLAWQIA) threads the bilayer. Residues 92–114 (KSKPATGTPSVEPVGFWASLGLQ) are Cytoplasmic-facing. Residues 115 to 135 (FVNVKIILYGITALSTFVLPV) form a helical membrane-spanning segment. Over 136–139 (TREP) the chain is Periplasmic. The chain crosses the membrane as a helical span at residues 140-160 (VWLISVSLLLAAIGALGNLCW). Topologically, residues 161-170 (ALAGHLFQRL) are cytoplasmic. Residues 171 to 191 (FLLYGRQLNWMLAALLVYCAV) form a helical membrane-spanning segment. The Periplasmic segment spans residues 192–196 (RIVVE).

This sequence belongs to the Rht family.

It localises to the cell inner membrane. The catalysed reaction is O-acetyl-L-serine(in) = O-acetyl-L-serine(out). It carries out the reaction L-cysteine(in) = L-cysteine(out). Exporter of O-acetylserine (OAS) and cysteine. The chain is Cysteine/O-acetylserine efflux protein (eamB) from Klebsiella pneumoniae subsp. pneumoniae (strain ATCC 700721 / MGH 78578).